The primary structure comprises 99 residues: VQRAPNVQVYSRHPAENGKPNFLNCYVSGFHPPQIDIELLKNGVKIENVEQSDLSFNKDWSFYLLVHTEFTPNNKNEYSCRVKHVTLKEPMTVKWDRDY.

The Ig-like C1-type domain maps to 5–92 (PNVQVYSRHP…KHVTLKEPMT (88 aa)). Residues Cys-25 and Cys-80 are joined by a disulfide bond.

This sequence belongs to the beta-2-microglobulin family. In terms of assembly, heterodimer of an alpha chain and a beta chain. Beta-2-microglobulin is the beta-chain of major histocompatibility complex class I molecules.

It localises to the secreted. Functionally, component of the class I major histocompatibility complex (MHC). Involved in the presentation of peptide antigens to the immune system. In Oryctolagus cuniculus (Rabbit), this protein is Beta-2-microglobulin (B2M).